The sequence spans 397 residues: 3-ketoacyl-CoA thiolase, mitochondrial (397 aa).

The N-terminal 16 residues, 1–16 (MALLRGVFIVAAKRTP), are a transit peptide targeting the mitochondrion; not cleaved. An N6-acetyllysine; alternate modification is found at lysine 25. Residue lysine 25 is modified to N6-succinyllysine; alternate. Catalysis depends on cysteine 92, which acts as the Acyl-thioester intermediate. Threonine 119 carries the post-translational modification Phosphothreonine. Phosphoserine is present on serine 121. Residue tyrosine 127 is modified to Phosphotyrosine. Phosphothreonine is present on threonine 136. Lysine 137 is modified (N6-acetyllysine; alternate). Residue lysine 137 is modified to N6-succinyllysine; alternate. Phosphoserine is present on serine 140. 4 positions are modified to N6-acetyllysine; alternate: lysine 143, lysine 171, lysine 191, and lysine 209. 4 positions are modified to N6-succinyllysine; alternate: lysine 143, lysine 171, lysine 191, and lysine 209. 2 positions are modified to N6-succinyllysine: lysine 212 and lysine 214. Positions 224 and 227 each coordinate CoA. Lysine 234 is modified (N6-acetyllysine; alternate). An N6-succinyllysine; alternate modification is found at lysine 234. Lysine 240 carries the N6-succinyllysine modification. Lysine 241 is subject to N6-acetyllysine. Residue serine 251 coordinates CoA. N6-acetyllysine is present on residues lysine 269 and lysine 270. Lysine 305 is subject to N6-acetyllysine; alternate. Position 305 is an N6-succinyllysine; alternate (lysine 305). Serine 310 carries the post-translational modification Phosphoserine. Lysine 312 carries the post-translational modification N6-acetyllysine; alternate. Lysine 312 carries the N6-succinyllysine; alternate modification. The residue at position 333 (serine 333) is a Phosphoserine. Residues lysine 340 and lysine 375 each carry the N6-acetyllysine modification. Catalysis depends on cysteine 382, which acts as the Proton donor/acceptor.

It belongs to the thiolase-like superfamily. Thiolase family. Homotetramer. Interacts with BNIP3.

The protein localises to the mitochondrion. It catalyses the reaction an acyl-CoA + acetyl-CoA = a 3-oxoacyl-CoA + CoA. It carries out the reaction 2 acetyl-CoA = acetoacetyl-CoA + CoA. The catalysed reaction is acetyl-CoA + H2O = acetate + CoA + H(+). The enzyme catalyses propanoyl-CoA + H2O = propanoate + CoA + H(+). It catalyses the reaction butanoyl-CoA + H2O = butanoate + CoA + H(+). It carries out the reaction hexanoyl-CoA + H2O = hexanoate + CoA + H(+). The catalysed reaction is octanoyl-CoA + H2O = octanoate + CoA + H(+). The enzyme catalyses decanoyl-CoA + H2O = decanoate + CoA + H(+). It catalyses the reaction dodecanoyl-CoA + H2O = dodecanoate + CoA + H(+). It carries out the reaction tetradecanoyl-CoA + H2O = tetradecanoate + CoA + H(+). The catalysed reaction is hexadecanoyl-CoA + H2O = hexadecanoate + CoA + H(+). It functions in the pathway lipid metabolism; fatty acid beta-oxidation. Functionally, in the production of energy from fats, this is one of the enzymes that catalyzes the last step of the mitochondrial beta-oxidation pathway, an aerobic process breaking down fatty acids into acetyl-CoA. Using free coenzyme A/CoA, catalyzes the thiolytic cleavage of medium- to long-chain unbranched 3-oxoacyl-CoAs into acetyl-CoA and a fatty acyl-CoA shortened by two carbon atoms. Also catalyzes the condensation of two acetyl-CoA molecules into acetoacetyl-CoA and could be involved in the production of ketone bodies. Also displays hydrolase activity on various fatty acyl-CoAs. Thereby, could be responsible for the production of acetate in a side reaction to beta-oxidation. Abolishes BNIP3-mediated apoptosis and mitochondrial damage. The polypeptide is 3-ketoacyl-CoA thiolase, mitochondrial (ACAA2) (Bos taurus (Bovine)).